We begin with the raw amino-acid sequence, 214 residues long: Phosphoenolpyruvate guanylyltransferase (214 aa).

Residues threonine 148, glycine 163, and serine 166 each contribute to the phosphoenolpyruvate site.

It belongs to the CofC family.

It carries out the reaction phosphoenolpyruvate + GTP + H(+) = enolpyruvoyl-2-diphospho-5'-guanosine + diphosphate. Its pathway is cofactor biosynthesis; coenzyme F420 biosynthesis. In terms of biological role, guanylyltransferase that catalyzes the activation of phosphoenolpyruvate (PEP) as enolpyruvoyl-2-diphospho-5'-guanosine, via the condensation of PEP with GTP. It is involved in the biosynthesis of coenzyme F420, a hydride carrier cofactor. The sequence is that of Phosphoenolpyruvate guanylyltransferase from Mycobacterium tuberculosis (strain KZN 1435 / MDR).